A 657-amino-acid polypeptide reads, in one-letter code: Receptor-type tyrosine-protein phosphatase R (657 aa).

An N-terminal signal peptide occupies residues 1–21 (MRRAVCFPALCLLLNLHAAGC). Residues 22-227 (FSGNNDHFLA…EADKIWSKEG (206 aa)) lie on the Extracellular side of the membrane. The O-linked (Xyl...) (chondroitin sulfate) serine glycan is linked to Ser-23. Residue Asn-129 is glycosylated (N-linked (GlcNAc...) asparagine). A helical transmembrane segment spans residues 228-248 (FYAVVIFLSIFVIIVTCLMIL). The Cytoplasmic segment spans residues 249 to 657 (YRLKERFQLS…ESRLSAETVQ (409 aa)). Ser-272 carries the phosphoserine modification. The residue at position 339 (Ser-339) is a Phosphoserine; by PKA. In terms of domain architecture, Tyrosine-protein phosphatase spans 393-647 (LQSEFMEIPM…EFVHHALCLY (255 aa)). Substrate is bound by residues Asp-554, 588–594 (CSAGIGR), and Gln-632. Catalysis depends on Cys-588, which acts as the Phosphocysteine intermediate.

The protein belongs to the protein-tyrosine phosphatase family. Receptor class 7 subfamily. In terms of assembly, interacts with MAPKs. Detected in cerebrospinal fluid (at protein level). Expressed in brain, placenta, small intestine, stomach, uterus and weakly in the prostate. Isoform alpha has been observed only in the brain. Isoform gamma is expressed in brain, placenta and uterus. Isoform delta is expressed in brain, kidney, placenta, prostate, small intestine and uterus.

Its subcellular location is the secreted. The protein localises to the cell membrane. It is found in the cytoplasm. It localises to the perinuclear region. It carries out the reaction O-phospho-L-tyrosyl-[protein] + H2O = L-tyrosyl-[protein] + phosphate. Functionally, sequesters mitogen-activated protein kinases (MAPKs) such as MAPK1, MAPK3 and MAPK14 in the cytoplasm in an inactive form. The MAPKs bind to a dephosphorylated kinase interacting motif, phosphorylation of which by the protein kinase A complex releases the MAPKs for activation and translocation into the nucleus. The chain is Receptor-type tyrosine-protein phosphatase R (PTPRR) from Homo sapiens (Human).